Consider the following 117-residue polypeptide: Holo-[acyl-carrier-protein] synthase (117 aa).

Mg(2+) is bound by residues Asp-8 and Glu-55.

Belongs to the P-Pant transferase superfamily. AcpS family. It depends on Mg(2+) as a cofactor.

It localises to the cytoplasm. It carries out the reaction apo-[ACP] + CoA = holo-[ACP] + adenosine 3',5'-bisphosphate + H(+). Functionally, transfers the 4'-phosphopantetheine moiety from coenzyme A to a Ser of acyl-carrier-protein. This chain is Holo-[acyl-carrier-protein] synthase, found in Finegoldia magna (strain ATCC 29328 / DSM 20472 / WAL 2508) (Peptostreptococcus magnus).